A 130-amino-acid chain; its full sequence is MSDNKEDSTVDNSNSTEEVPLPTRFEVELEFVQSLANIPYVTYLLTQQQLLWKDPKFKNYLKYLEYWCEPPYAQCIVYPNALFILKLLNGFMEKATVNEDGLLDGLEDLPKVIQLQGNQWMNEMVERWAN.

It belongs to the Mediator complex subunit 31 family. Component of the Mediator complex.

It localises to the nucleus. Component of the Mediator complex, a coactivator involved in the regulated transcription of nearly all RNA polymerase II-dependent genes. Mediator functions as a bridge to convey information from gene-specific regulatory proteins to the basal RNA polymerase II transcription machinery. Mediator is recruited to promoters by direct interactions with regulatory proteins and serves as a scaffold for the assembly of a functional preinitiation complex with RNA polymerase II and the general transcription factors. This Candida glabrata (strain ATCC 2001 / BCRC 20586 / JCM 3761 / NBRC 0622 / NRRL Y-65 / CBS 138) (Yeast) protein is Mediator of RNA polymerase II transcription subunit 31 (SOH1).